Reading from the N-terminus, the 734-residue chain is Amino-acid acetyltransferase, mitochondrial (734 aa).

Positions 384–433 are disordered; sequence YSETSSRSTRAEADSNFNLRDDIPLSSFTEQKSGELEYSPRHQNDSPTQQ. Composition is skewed to basic and acidic residues over residues 392-406 and 415-427; these read TRAE…RDDI and KSGE…RHQN. In terms of domain architecture, N-acetyltransferase spans 555-724; that stretch reads GVPQISLTDP…YEAVCKTIEP (170 aa).

This sequence belongs to the acetyltransferase family.

The protein resides in the mitochondrion. The catalysed reaction is L-glutamate + acetyl-CoA = N-acetyl-L-glutamate + CoA + H(+). Its pathway is amino-acid biosynthesis; L-arginine biosynthesis; N(2)-acetyl-L-ornithine from L-glutamate: step 1/4. Functionally, N-acetylglutamate synthase involved in arginine biosynthesis. This chain is Amino-acid acetyltransferase, mitochondrial (arg2), found in Botryotinia fuckeliana (strain B05.10) (Noble rot fungus).